A 61-amino-acid polypeptide reads, in one-letter code: Metallothionein-1B (61 aa).

The segment at 1–29 (MDPNCSCPTSGSCSCAGSCTCKACRCPSC) is beta. The a divalent metal cation site is built by cysteine 5, cysteine 7, cysteine 13, cysteine 15, cysteine 19, cysteine 21, cysteine 24, cysteine 26, cysteine 29, cysteine 33, cysteine 34, cysteine 36, cysteine 37, cysteine 41, cysteine 44, cysteine 48, cysteine 50, cysteine 57, cysteine 59, and cysteine 60. The segment at 30–61 (KKSCCSCCPVGCAKCAQGCVCKGASDKCSCCA) is alpha.

Belongs to the metallothionein superfamily. Type 1 family.

Metallothioneins have a high content of cysteine residues that bind various heavy metals; these proteins are transcriptionally regulated by both heavy metals and glucocorticoids. In Ovis aries (Sheep), this protein is Metallothionein-1B (MT1B).